The sequence spans 914 residues: Beta-mannosidase A (914 aa).

The signal sequence occupies residues 1–20; sequence MRFTATAAALVASSIPATLG. N-linked (GlcNAc...) asparagine glycosylation is found at asparagine 39, asparagine 79, asparagine 230, asparagine 265, asparagine 299, asparagine 309, and asparagine 330. Glutamate 462 (proton donor) is an active-site residue. N-linked (GlcNAc...) asparagine glycans are attached at residues asparagine 591, asparagine 614, asparagine 641, asparagine 721, asparagine 744, asparagine 773, asparagine 784, and asparagine 909.

The protein belongs to the glycosyl hydrolase 2 family. Beta-mannosidase A subfamily. As to quaternary structure, homodimer.

Its subcellular location is the secreted. It catalyses the reaction Hydrolysis of terminal, non-reducing beta-D-mannose residues in beta-D-mannosides.. It functions in the pathway glycan metabolism; N-glycan degradation. In terms of biological role, exoglycosidase that cleaves the single beta-linked mannose residue from the non-reducing end of beta-mannosidic oligosaccharides of various complexity and length. Involved in the degradation of polymeric mannan and galactomannan. This is Beta-mannosidase A (mndA) from Aspergillus flavus (strain ATCC 200026 / FGSC A1120 / IAM 13836 / NRRL 3357 / JCM 12722 / SRRC 167).